Consider the following 211-residue polypeptide: Intermembrane phospholipid transport system binding protein MlaC (211 aa).

The first 21 residues, 1–21 (MFKRLMMVALLVIAPLSAATA), serve as a signal peptide directing secretion.

It belongs to the MlaC/ttg2D family. Interacts with the MlaA-OmpF outer membrane complex and with the inner membrane ABC transporter complex MlaFEDB, via direct interaction with MlaD.

Its subcellular location is the periplasm. Involved in a phospholipid transport pathway that maintains lipid asymmetry in the outer membrane by retrograde trafficking of phospholipids from the outer membrane to the inner membrane. May transfer phospholipid across the periplasmic space and deliver it to the MlaFEDB complex at the inner membrane. The protein is Intermembrane phospholipid transport system binding protein MlaC of Escherichia coli (strain K12).